The sequence spans 369 residues: Anthranilate phosphoribosyltransferase (369 aa).

5-phospho-alpha-D-ribose 1-diphosphate contacts are provided by residues Gly111, 114 to 115 (GD), Thr119, 121 to 124 (NIST), 139 to 147 (KHGNRGVSS), and Ser151. Residue Gly111 coordinates anthranilate. Ser123 is a binding site for Mg(2+). Asn142 serves as a coordination point for anthranilate. Arg197 provides a ligand contact to anthranilate. Asp256 and Glu257 together coordinate Mg(2+).

The protein belongs to the anthranilate phosphoribosyltransferase family. Homodimer. Mg(2+) is required as a cofactor.

It catalyses the reaction N-(5-phospho-beta-D-ribosyl)anthranilate + diphosphate = 5-phospho-alpha-D-ribose 1-diphosphate + anthranilate. It participates in amino-acid biosynthesis; L-tryptophan biosynthesis; L-tryptophan from chorismate: step 2/5. Its function is as follows. Catalyzes the transfer of the phosphoribosyl group of 5-phosphorylribose-1-pyrophosphate (PRPP) to anthranilate to yield N-(5'-phosphoribosyl)-anthranilate (PRA). In Cupriavidus pinatubonensis (strain JMP 134 / LMG 1197) (Cupriavidus necator (strain JMP 134)), this protein is Anthranilate phosphoribosyltransferase.